Consider the following 122-residue polypeptide: Large ribosomal subunit protein uL14 (122 aa).

It belongs to the universal ribosomal protein uL14 family. In terms of assembly, part of the 50S ribosomal subunit. Forms a cluster with proteins L3 and L19. In the 70S ribosome, L14 and L19 interact and together make contacts with the 16S rRNA in bridges B5 and B8.

In terms of biological role, binds to 23S rRNA. Forms part of two intersubunit bridges in the 70S ribosome. This chain is Large ribosomal subunit protein uL14, found in Mycoplasmopsis pulmonis (strain UAB CTIP) (Mycoplasma pulmonis).